The chain runs to 278 residues: HTH-type transcriptional regulator TsaQ1/TsaQ2 (278 aa).

Residues 19–80 (VHSLAKGLEI…PRSRKLAMGA (62 aa)) enclose the HTH iclR-type domain. The H-T-H motif DNA-binding region spans 40–59 (NQQLVELTGLPKATVSRLTS). An IclR-ED domain is found at 95–266 (LQRIARPHME…VQDIQAEMRA (172 aa)).

Its function is as follows. Both copies function as additional regulators for the tsa locus, specifically for tsaT. The polypeptide is HTH-type transcriptional regulator TsaQ1/TsaQ2 (tsaQ1) (Comamonas testosteroni (Pseudomonas testosteroni)).